We begin with the raw amino-acid sequence, 300 residues long: Inosose dehydratase (300 aa).

Belongs to the IolE/MocC family. Requires glutathione as cofactor. It depends on Co(2+) as a cofactor. The cofactor is Mn(2+).

It catalyses the reaction scyllo-inosose = 3D-3,5/4-trihydroxycyclohexane-1,2-dione + H2O. In terms of biological role, catalyzes the dehydration of inosose (2-keto-myo-inositol, 2KMI or 2,4,6/3,5-pentahydroxycyclohexanone) to 3D-(3,5/4)-trihydroxycyclohexane-1,2-dione (D-2,3-diketo-4-deoxy-epi-inositol). This chain is Inosose dehydratase, found in Mesomycoplasma hyopneumoniae (strain 232) (Mycoplasma hyopneumoniae).